A 1099-amino-acid chain; its full sequence is Solute carrier family 38 member 10 (1099 aa).

Helical transmembrane passes span 9 to 31 (WGLV…PFCF), 36 to 58 (IVLG…MFLV), 84 to 104 (LVET…YVVI), 123 to 143 (TFRV…LSLQ), 153 to 173 (FSAM…LSSF), 229 to 249 (IFAS…FFGY), 272 to 292 (MIRV…ILPC), 323 to 343 (VLTL…PNVE), 345 to 365 (ILGF…PALI), and 378 to 398 (VVLW…LSVS). 2 disordered regions span residues 440–679 (DSQE…EEAG) and 720–1047 (EIRQ…LAPK). Position 441 is a phosphoserine (Ser441). 5 stretches are compositionally biased toward basic and acidic residues: residues 441–454 (SQEK…KEVL), 493–508 (EAHR…KVVV), 517–528 (PEEKKPPPKLPD), 544–561 (ESEK…KRPE), and 586–599 (PRKE…RDLH). 2 positions are modified to phosphoserine: Ser607 and Ser635. 3 stretches are compositionally biased toward basic and acidic residues: residues 653–663 (EAAEQREKNEA), 720–735 (EIRQ…KPKP), and 749–766 (GQEE…HAGE). Positions 698–734 (VQQKRLLDQQEKLLAVIEEQHKEIRQQRQEGEEDKPK) form a coiled coil. Phosphothreonine is present on Thr767. 5 stretches are compositionally biased toward basic and acidic residues: residues 793-802 (KGQHPLEEVK), 852-894 (EPVH…ETGK), 917-928 (EDSHSKSRHSEP), 957-969 (KSQD…RSEG), and 1010-1022 (QKPE…RDLK). At Ser886 the chain carries Phosphoserine.

It belongs to the amino acid/polyamine transporter 2 family. Only expressed in the pituitary, adrenal gland, stomach and in the upper gastrointestinal tract.

It localises to the membrane. The enzyme catalyses L-glutamate(out) = L-glutamate(in). It carries out the reaction L-glutamine(out) = L-glutamine(in). It catalyses the reaction L-alanine(in) = L-alanine(out). The catalysed reaction is L-serine(in) = L-serine(out). The enzyme catalyses L-leucine(in) = L-leucine(out). Its function is as follows. Facilitates bidirectional transport of amino acids. May act as a glutamate sensor that regulates glutamate-glutamine cycle and mTOR signaling in the brain. The transport mechanism remains to be elucidated. This Rattus norvegicus (Rat) protein is Solute carrier family 38 member 10.